The primary structure comprises 475 residues: UDP-N-acetylmuramate--L-alanine ligase (475 aa).

An ATP-binding site is contributed by 125–131; that stretch reads GTHGKTT.

This sequence belongs to the MurCDEF family.

The protein localises to the cytoplasm. It catalyses the reaction UDP-N-acetyl-alpha-D-muramate + L-alanine + ATP = UDP-N-acetyl-alpha-D-muramoyl-L-alanine + ADP + phosphate + H(+). The protein operates within cell wall biogenesis; peptidoglycan biosynthesis. Cell wall formation. This is UDP-N-acetylmuramate--L-alanine ligase from Glaesserella parasuis serovar 5 (strain SH0165) (Haemophilus parasuis).